A 136-amino-acid chain; its full sequence is Small ribosomal subunit protein uS9 (136 aa).

Residues 115–136 are disordered; that stretch reads KVKERKKPGLRKARKARQFSKR. A compositionally biased stretch (basic residues) spans 117–136; that stretch reads KERKKPGLRKARKARQFSKR.

It belongs to the universal ribosomal protein uS9 family.

This chain is Small ribosomal subunit protein uS9, found in Mycoplasmopsis pulmonis (strain UAB CTIP) (Mycoplasma pulmonis).